The chain runs to 293 residues: LysM and putative peptidoglycan-binding domain-containing protein 4 (293 aa).

The Extracellular segment spans residues 1–214; the sequence is MRQKEVLAKS…VADGADCGIQ (214 aa). Positions 28-65 are disordered; it reads FNNGSGDSGDSSEEESHQVVLRPRGKEHQKNSSQRPGA. An N-linked (GlcNAc...) asparagine glycan is attached at asparagine 30. The LysM domain occupies 71–115; sequence LQRELAQEDSLNKLALQYGCKVADIKKANNFIREQDLYALKSIKI. The chain crosses the membrane as a helical span at residues 215–235; sequence WWNAVFLMLLIGIVLPVFYLV. The Cytoplasmic portion of the chain corresponds to 236 to 293; sequence YFKIQATGEPSNGLNATVVPNGSMTLSPVPGQAPRLAIPVPTLPASDSQVSPTTQAGA.

It is found in the membrane. This chain is LysM and putative peptidoglycan-binding domain-containing protein 4 (Lysmd4), found in Mus musculus (Mouse).